Consider the following 1612-residue polypeptide: MAKSSLAGADGALTWVNNAAKKEELETSNKNDSSKKLSVERVYQKKTQLEHILLRPDTYIGSVEPLTQLMWVYDEDVGMNCREVTFVPGLYKIFDEILVNAADNKQRDKNMTCIKVSIDPESNIISIWNNGKGIPVVEHKVEKVYVPALIFGQLLTSSNYDDDEKKVTGGRNGYGAKLCNIFSTKFTVETACKEYKHSFKQTWMNNMMKTSEAKIKHFDGEDYTCITFQPDLAKFKMEKLDKDIVALMTRRAYDLAGSCKGVKVMFNGKKLPVNGFRSYVDLYVKDKLDETGVALKVIHELANERWDVCLTLSEKGFQQISFVNSIATTKGGRHVDYVVDQVVGKLIEVVKKKNKAGVSVKPFQVKNHIWVFINCLIENPTFDSQTKENMTLQPKSFGSKCQLSEKFFKAASNCGIVESILNWVKFKAQTQLNKKCSSVKYSKIKGIPKLDDANDAGGKHSLECTLILTEGDSAKSLAVSGLGVIGRDRYGVFPLRGKILNVREASHKQIMENAEINNIIKIVGLQYKKSYDDAESLKTLRYGKIMIMTDQDQDGSHIKGLLINFIHHNWPSLLKHGFLEEFITPIVKASKNKQELSFYSIPEFDEWKKHIENQKAWKIKYYKGLGTSTAKEAKEYFADMERHRILFRYAGPEDDAAITLAFSKKKIDDRKEWLTNFMEDRRQRRLHGLPEQFLYGTATKHLTYNDFINKELILFSNSDNERSIPSLVDGFKPGQRKVLFTCFKRNDKREVKVAQLAGSVAEMSAYHHGEQALMMTIVNLAQNFVGSNNINLLQPIGQFGTRLHGGKDAASPRYIFTMLSSLARLLFPAVDDNLLKFLYDDNQRVEPEWYIPIIPMVLINGAEGIGTGWACKLPNYDAREIVNNVRRMLDGLDPHPMLPNYKNFKGTIQELGQNQYAVSGEIFVVDRNTVEITELPVRTWTQVYKEQVLEPMLNGTDKTPALISDYKEYHTDTTVKFVVKMTEEKLAQAEAAGLHKVFKLQTTLTCNSMVLFDHMGCLKKYETVQDILKEFFDLRLSYYGLRKEWLVGMLGAESTKLNNQARFILEKIQGKITIENRSKKDLIQMLVQRGYESDPVRAWKEAQEKAAEEEDTQNQHDDSSSDSGTPSGPDFNYILNMSLWSLTKEKVEELIKQRDTKGREVNDLKRKSPSDLWKEDLAAFVEELDKVEAQEREDILAGMSGKAIKGKVGKPKVKKLQLEETMPSPYGRRIVPEITAMKADASRKLLKKKKGDPDTPVVKVEFDEEFSGTPVEGTGEETLTPSAPVNKGPKPKREKKEPGTRVRKTPTSAGKPNAKKVKKRNPWSDDESKSESDLEETEPVVIPRDSLLRRAAAERPKYTFDFSEEEEEDADDDDDNNDLEELKVKASPITNDGEDEFVPSDGLDKDEYAFSPGKSKATPEKSSHDKKSQDFGNLFSFPSYSQKSEDDSAKFDSNEEDTASVFTPSFGLKQTDKVPSKTVAAKKGKPPSDTAPKAKRAPKQKKVVETVNSDSDSEFGIPKKTTTPKGKGRGAKKRKASGSENEGDYNPGRKPSKTASKKPKKTSFDQDSDVDIFPSDFTSEPPALPRTGRARKEVKYFAESDEEEDVDFAMFN.

Position 2 is an N-acetylalanine (A2). An N6-acetyllysine modification is found at K3. Glycyl lysine isopeptide (Lys-Gly) (interchain with G-Cter in SUMO2) cross-links involve residues K21 and K22. ATP-binding positions include N100, N129, and 157–159 (SSN). Glycyl lysine isopeptide (Lys-Gly) (interchain with G-Cter in SUMO2) cross-links involve residues K165 and K166. 170 to 177 (GRNGYGAK) provides a ligand contact to ATP. Residues K216 and K287 each participate in a glycyl lysine isopeptide (Lys-Gly) (interchain with G-Cter in SUMO2) cross-link. The segment at 351 to 353 (KKK) is interaction with DNA. Glycyl lysine isopeptide (Lys-Gly) (interchain with G-Cter in SUMO2) cross-links involve residues K355 and K361. 385–387 (QTK) lines the ATP pocket. Residues K425, K427, and K434 each participate in a glycyl lysine isopeptide (Lys-Gly) (interchain with G-Cter in SUMO2) cross-link. The Toprim domain occupies 464 to 581 (CTLILTEGDS…SLLKHGFLEE (118 aa)). Mg(2+)-binding residues include E470, D550, and D552. Residues K588, K593, K623, K631, K634, K664, and K700 each participate in a glycyl lysine isopeptide (Lys-Gly) (interchain with G-Cter in SUMO2) cross-link. One can recognise a Topo IIA-type catalytic domain in the interval 724 to 1177 (IPSLVDGFKP…SPSDLWKEDL (454 aa)). The O-(5'-phospho-DNA)-tyrosine intermediate role is filled by Y814. Residues 999 to 1008 (KLQTTLTCNS) form an interaction with DNA region. K1080 is covalently cross-linked (Glycyl lysine isopeptide (Lys-Gly) (interchain with G-Cter in SUMO2)). Positions 1098 to 1128 (AWKEAQEKAAEEEDTQNQHDDSSSDSGTPSG) are disordered. Residues K1202, K1205, K1214, and K1215 each participate in a glycyl lysine isopeptide (Lys-Gly) (interchain with G-Cter in SUMO2) cross-link. At S1224 the chain carries Phosphoserine. Residues K1238, K1250, and K1259 each participate in a glycyl lysine isopeptide (Lys-Gly) (interchain with G-Cter in SUMO2) cross-link. Positions 1245–1586 (LLKKKKGDPD…FTSEPPALPR (342 aa)) are disordered. T1280 bears the Phosphothreonine mark. Glycyl lysine isopeptide (Lys-Gly) (interchain with G-Cter in SUMO2) cross-links involve residues K1311 and K1315. Basic and acidic residues-rich tracts occupy residues 1322–1332 (PWSDDESKSES) and 1346–1358 (SLLR…RPKY). S1324, S1328, S1330, S1332, and S1346 each carry phosphoserine. The residue at position 1358 (Y1358) is a Phosphotyrosine. Residues 1362–1379 (FSEEEEEDADDDDDNNDL) are compositionally biased toward acidic residues. Residue S1363 is modified to Phosphoserine. K1385 is covalently cross-linked (Glycyl lysine isopeptide (Lys-Gly) (interchain with G-Cter in SUMO2)). S1387 is modified (phosphoserine). T1390 bears the Phosphothreonine mark. At S1400 the chain carries Phosphoserine. A Phosphotyrosine modification is found at Y1408. S1411 bears the Phosphoserine mark. A compositionally biased stretch (basic and acidic residues) spans 1417–1429 (ATPEKSSHDKKSQ). Residue K1427 forms a Glycyl lysine isopeptide (Lys-Gly) (interchain with G-Cter in SUMO2) linkage. Residues S1428, S1439, and S1441 each carry the phosphoserine modification. K1443 is covalently cross-linked (Glycyl lysine isopeptide (Lys-Gly) (interchain with G-Cter in SUMO2)). Over residues 1443–1453 (KSEDDSAKFDS) the composition is skewed to basic and acidic residues. Phosphoserine is present on residues S1448, S1453, and S1460. Residue K1477 forms a Glycyl lysine isopeptide (Lys-Gly) (interchain with G-Cter in SUMO2) linkage. The interval 1493–1499 (KAKRAPK) is interaction with PLSCR1. Residues S1509, S1511, and S1513 each carry the phosphoserine modification. A compositionally biased stretch (basic residues) spans 1526 to 1536 (GKGRGAKKRKA). 2 positions are modified to phosphoserine: S1537 and S1539. Residues 1550-1561 (KPSKTASKKPKK) are compositionally biased toward basic residues. The residue at position 1562 (T1562) is a Phosphothreonine. 2 positions are modified to phosphoserine: S1563 and S1568. Y1596 carries the phosphotyrosine modification. Position 1600 is a phosphoserine (S1600).

This sequence belongs to the type II topoisomerase family. In terms of assembly, homodimer. Interacts with PLSCR1 and KIAA1210. Mg(2+) is required as a cofactor. The cofactor is Mn(2+). Requires Ca(2+) as cofactor.

The protein localises to the nucleus. The protein resides in the nucleolus. It localises to the nucleoplasm. It catalyses the reaction ATP-dependent breakage, passage and rejoining of double-stranded DNA.. Key decatenating enzyme that alters DNA topology by binding to two double-stranded DNA molecules, generating a double-stranded break in one of the strands, passing the intact strand through the broken strand, and religating the broken strand. This chain is DNA topoisomerase 2-beta (TOP2B), found in Cricetulus longicaudatus (Long-tailed dwarf hamster).